The following is a 110-amino-acid chain: Large ribosomal subunit protein uL22 (110 aa).

It belongs to the universal ribosomal protein uL22 family. In terms of assembly, part of the 50S ribosomal subunit.

In terms of biological role, this protein binds specifically to 23S rRNA; its binding is stimulated by other ribosomal proteins, e.g. L4, L17, and L20. It is important during the early stages of 50S assembly. It makes multiple contacts with different domains of the 23S rRNA in the assembled 50S subunit and ribosome. Functionally, the globular domain of the protein is located near the polypeptide exit tunnel on the outside of the subunit, while an extended beta-hairpin is found that lines the wall of the exit tunnel in the center of the 70S ribosome. In Haemophilus influenzae (strain 86-028NP), this protein is Large ribosomal subunit protein uL22.